A 130-amino-acid chain; its full sequence is Small ribosomal subunit protein uS9 (130 aa).

It belongs to the universal ribosomal protein uS9 family.

This is Small ribosomal subunit protein uS9 from Burkholderia mallei (strain NCTC 10247).